The following is an 84-amino-acid chain: U4-theraphotoxin-Hhn1n (84 aa).

Residues 1-22 (MKVTLIAILTCAAVLVLHTTAA) form the signal peptide. Positions 23 to 47 (EELEESQLMEVGMPDTELAAVDEER) are excised as a propeptide. 3 cysteine pairs are disulfide-bonded: Cys51-Cys65, Cys55-Cys76, and Cys70-Cys81.

Belongs to the neurotoxin 12 (Hwtx-2) family. 02 (Hwtx-2) subfamily. In terms of tissue distribution, expressed by the venom gland.

The protein localises to the secreted. Postsynaptic neurotoxin. The polypeptide is U4-theraphotoxin-Hhn1n (Cyriopagopus hainanus (Chinese bird spider)).